The primary structure comprises 439 residues: Choline monooxygenase, chloroplastic (439 aa).

Residues 1–60 (MMAASASATTMLLKYPTTVCGIPNPSSNNNNDPSNNIVSIPQNTTNPTLKSRTPNKITTN) constitute a chloroplast transit peptide. Over residues 24 to 41 (NPSSNNNNDPSNNIVSIP) the composition is skewed to low complexity. The tract at residues 24 to 54 (NPSSNNNNDPSNNIVSIPQNTTNPTLKSRTP) is disordered. Residues 42–54 (QNTTNPTLKSRTP) show a composition bias toward polar residues. Residues 120 to 227 (WQVAGISDQI…VAVWGPFVLI (108 aa)) enclose the Rieske domain. [2Fe-2S] cluster is bound by residues Cys-162, His-164, Cys-181, and His-184. 2 residues coordinate Fe cation: His-287 and His-292.

In terms of assembly, homotrimer or homodimer. It depends on [2Fe-2S] cluster as a cofactor. Fe cation serves as cofactor. The cofactor is Mg(2+). In terms of tissue distribution, expressed in leaves.

It is found in the plastid. The protein localises to the chloroplast stroma. It carries out the reaction choline + 2 reduced [2Fe-2S]-[ferredoxin] + O2 + 2 H(+) = betaine aldehyde hydrate + 2 oxidized [2Fe-2S]-[ferredoxin] + H2O. It participates in amine and polyamine biosynthesis; betaine biosynthesis via choline pathway; betaine aldehyde from choline (monooxygenase route): step 1/1. Its function is as follows. Catalyzes the first step of the osmoprotectant glycine betaine synthesis. In Spinacia oleracea (Spinach), this protein is Choline monooxygenase, chloroplastic (CMO).